The following is a 903-amino-acid chain: Ras and Rab interactor 2 (903 aa).

Positions 44-73 are disordered; sequence NGLEPSETHSMVRHKDGGYSEDKDGKTCPR. The span at 56-73 shows a compositional bias: basic and acidic residues; it reads RHKDGGYSEDKDGKTCPR. The region spanning 97–190 is the SH2 domain; the sequence is WLQLSLSEEE…VLPFTLKLPY (94 aa). Disordered regions lie at residues 282-455 and 471-491; these read QDLS…EFDR and EDYE…SKKK. The segment covering 306–315 has biased composition (pro residues); sequence SPPPRPPPPA. A compositionally biased stretch (polar residues) spans 318–338; it reads SLHTSPGLSRTEPQTSMPETV. Phosphoserine is present on S366. The span at 419-431 shows a compositional bias: pro residues; the sequence is APPPGSESQPPPC. The segment covering 439-450 has biased composition (low complexity); sequence SDMSLSTSSSDS. Positions 506–775 are interaction with RAB5B; it reads LRKMSGVFSS…ARLLSSEARD (270 aa). Phosphoserine is present on S510. A Phosphothreonine modification is found at T518. Residues 627–766 form the VPS9 domain; sequence DGSWKQLKEN…IKNFQEEQAA (140 aa). The 92-residue stretch at 796–887 folds into the Ras-associating domain; sequence FQNYLRVAFQ…FHFVYKRIKS (92 aa).

The protein belongs to the RIN (Ras interaction/interference) family. Homotetramer; probably composed of anti-parallel linkage of two parallel dimers. Interacts with Ras. Interacts with RAB5B, with a much higher affinity for GTP-bound activated RAB5B. Does not interact with other members of the Rab family.

Its subcellular location is the cytoplasm. In terms of biological role, ras effector protein. May function as an upstream activator and/or downstream effector for RAB5B in endocytic pathway. May function as a guanine nucleotide exchange (GEF) of RAB5B, required for activating the RAB5 proteins by exchanging bound GDP for free GTP. The polypeptide is Ras and Rab interactor 2 (Rin2) (Mus musculus (Mouse)).